The sequence spans 117 residues: Histone H1-like protein HC1 (117 aa).

A disordered region spans residues 57–117 (EKSGLMTRKP…KSSKSRYLRK (61 aa)). The span at 66–81 (PATKAKKAAATKKAAP) shows a compositional bias: basic residues. The span at 82-94 (KPKIQAKAAPKAK) shows a compositional bias: low complexity. The segment covering 95-117 (ATTKKTPAKAKAKKSSKSRYLRK) has biased composition (basic residues).

This sequence belongs to the histone H1/H5 family. HCT subfamily.

Might have a role analogous to that of eukaryotic histone proteins. The polypeptide is Histone H1-like protein HC1 (hctA) (Chlamydia psittaci (Chlamydophila psittaci)).